Consider the following 503-residue polypeptide: Inosine-5'-monophosphate dehydrogenase (503 aa).

The K(+) site is built by Gly-20 and Ser-22. 2 CBS domains span residues 103–163 (FVVS…ETKV) and 167–228 (MTPF…LVDS). 261-263 (DSS) contributes to the NAD(+) binding site. K(+) is bound by residues Asp-264, Phe-266, Gly-314, and Gly-316. 312 to 314 (GIG) is a binding site for NAD(+). Ser-317 serves as a coordination point for IMP. Position 319 (Cys-319) interacts with K(+). Cys-319 (thioimidate intermediate) is an active-site residue. IMP is bound by residues 358–360 (DGG), 381–382 (GR), and 405–409 (YWGEG). Arg-418 functions as the Proton acceptor in the catalytic mechanism. Glu-431 provides a ligand contact to IMP. 4 residues coordinate K(+): Asn-460, Glu-485, Gly-486, and Gly-487.

Belongs to the IMPDH/GMPR family. In terms of assembly, homotetramer. K(+) serves as cofactor.

It is found in the cytoplasm. It carries out the reaction IMP + NAD(+) + H2O = XMP + NADH + H(+). Its pathway is purine metabolism; XMP biosynthesis via de novo pathway; XMP from IMP: step 1/1. Mycophenolic acid (MPA) is a non-competitive inhibitor that prevents formation of the closed enzyme conformation by binding to the same site as the amobile flap. In contrast, mizoribine monophosphate (MZP) is a competitive inhibitor that induces the closed conformation. MPA is a potent inhibitor of mammalian IMPDHs but a poor inhibitor of the bacterial enzymes. MZP is a more potent inhibitor of bacterial IMPDH. In terms of biological role, catalyzes the conversion of inosine 5'-phosphate (IMP) to xanthosine 5'-phosphate (XMP), the first committed and rate-limiting step in the de novo synthesis of guanine nucleotides, and therefore plays an important role in the regulation of cell growth. Could also have a single-stranded nucleic acid-binding activity and could play a role in RNA and/or DNA metabolism. In Tritrichomonas foetus (Trichomonas foetus), this protein is Inosine-5'-monophosphate dehydrogenase.